The chain runs to 161 residues: MKTVVFPGSFDPVTLGHIDLITRASKLAERVVIAVAVNTSKRTLFNLNERCDLLSEATAHLSGIEVIPFSGLLADFAKEHNAQALIRGIRGTTDADYELQLAQVNKALNSELETILLPANAATGFISSTVVKEVFKHNGDIDPFAPPCVKQALLIKHSENS.

Serine 9 is a substrate binding site. Residues 9–10 (SF) and histidine 17 each bind ATP. Substrate is bound by residues lysine 41, leucine 73, and arginine 87. Residues 88-90 (GIR), glutamate 98, and 123-129 (TGFISST) each bind ATP.

This sequence belongs to the bacterial CoaD family. In terms of assembly, homohexamer. Mg(2+) is required as a cofactor.

It localises to the cytoplasm. The catalysed reaction is (R)-4'-phosphopantetheine + ATP + H(+) = 3'-dephospho-CoA + diphosphate. It participates in cofactor biosynthesis; coenzyme A biosynthesis; CoA from (R)-pantothenate: step 4/5. Reversibly transfers an adenylyl group from ATP to 4'-phosphopantetheine, yielding dephospho-CoA (dPCoA) and pyrophosphate. This chain is Phosphopantetheine adenylyltransferase, found in Psychromonas ingrahamii (strain DSM 17664 / CCUG 51855 / 37).